The following is a 525-amino-acid chain: GMP synthase [glutamine-hydrolyzing] (525 aa).

Residues 9-207 (RILILDFGSQ…ILDICECEAL (199 aa)) enclose the Glutamine amidotransferase type-1 domain. The active-site Nucleophile is the C86. Catalysis depends on residues H181 and E183. In terms of domain architecture, GMPS ATP-PPase spans 208-400 (WTPSKIAEDA…LGLPYDMVYR (193 aa)). 235 to 241 (SGGVDSS) serves as a coordination point for ATP.

In terms of assembly, homodimer.

The enzyme catalyses XMP + L-glutamine + ATP + H2O = GMP + L-glutamate + AMP + diphosphate + 2 H(+). It functions in the pathway purine metabolism; GMP biosynthesis; GMP from XMP (L-Gln route): step 1/1. Catalyzes the synthesis of GMP from XMP. The sequence is that of GMP synthase [glutamine-hydrolyzing] from Pseudomonas fluorescens (strain SBW25).